A 498-amino-acid polypeptide reads, in one-letter code: Cobyric acid synthase (498 aa).

Positions 257–447 (DLEIAVLRLP…LHGLLDNGPW (191 aa)) constitute a GATase cobBQ-type domain. The active-site Nucleophile is cysteine 338. Residue histidine 439 is part of the active site.

This sequence belongs to the CobB/CobQ family. CobQ subfamily.

The protein operates within cofactor biosynthesis; adenosylcobalamin biosynthesis. Its function is as follows. Catalyzes amidations at positions B, D, E, and G on adenosylcobyrinic A,C-diamide. NH(2) groups are provided by glutamine, and one molecule of ATP is hydrogenolyzed for each amidation. In Synechococcus sp. (strain CC9605), this protein is Cobyric acid synthase.